The sequence spans 308 residues: Acetyl-coenzyme A carboxylase carboxyl transferase subunit beta (308 aa).

In terms of domain architecture, CoA carboxyltransferase N-terminal spans 25–294; sequence VWTKCTSCEQ…PLVVSVNDAP (270 aa). Zn(2+) contacts are provided by cysteine 29, cysteine 32, cysteine 48, and cysteine 51. The C4-type zinc-finger motif lies at 29 to 51; the sequence is CTSCEQVLYYAELERNLEVCPKC.

This sequence belongs to the AccD/PCCB family. In terms of assembly, acetyl-CoA carboxylase is a heterohexamer composed of biotin carboxyl carrier protein (AccB), biotin carboxylase (AccC) and two subunits each of ACCase subunit alpha (AccA) and ACCase subunit beta (AccD). Requires Zn(2+) as cofactor.

The protein localises to the cytoplasm. It catalyses the reaction N(6)-carboxybiotinyl-L-lysyl-[protein] + acetyl-CoA = N(6)-biotinyl-L-lysyl-[protein] + malonyl-CoA. The protein operates within lipid metabolism; malonyl-CoA biosynthesis; malonyl-CoA from acetyl-CoA: step 1/1. Component of the acetyl coenzyme A carboxylase (ACC) complex. Biotin carboxylase (BC) catalyzes the carboxylation of biotin on its carrier protein (BCCP) and then the CO(2) group is transferred by the transcarboxylase to acetyl-CoA to form malonyl-CoA. The sequence is that of Acetyl-coenzyme A carboxylase carboxyl transferase subunit beta from Vibrio cholerae serotype O1 (strain ATCC 39315 / El Tor Inaba N16961).